We begin with the raw amino-acid sequence, 91 residues long: Tachykinin-like peptide (91 aa).

The N-terminal stretch at methionine 1 to alanine 19 is a signal peptide. A propeptide spanning residues alanine 20–arginine 51 is cleaved from the precursor. Methionine 62 carries the post-translational modification Methionine amide. Residues lysine 64–lysine 91 form a disordered region. A propeptide spanning residues asparagine 66 to lysine 91 is cleaved from the precursor. The span at arginine 76–lysine 91 shows a compositional bias: basic and acidic residues.

Expressed by the skin glands.

The protein localises to the secreted. Its function is as follows. Tachykinins are active peptides which excite neurons, evoke behavioral responses, are potent vasodilators and secretagogues, and contract (directly or indirectly) many smooth muscles. In vitro, induces contraction of guinea pig ileum smooth muscle in a dose-dependent manner. This is Tachykinin-like peptide from Theloderma corticale (Kwangsi warty tree frog).